The sequence spans 271 residues: Phosphatidylinositol transfer protein alpha isoform (271 aa).

6 residues coordinate a 1,2-diacyl-sn-glycero-3-phospho-(1D-myo-inositol): T59, K61, E86, N90, T97, and K195. At K216 the chain carries N6-acetyllysine. Residues 251–264 (TKRQLDEMRQKDPV) show a composition bias toward basic and acidic residues. Residues 251–271 (TKRQLDEMRQKDPVKGMTADD) form a disordered region.

Belongs to the PtdIns transfer protein family. PI transfer class I subfamily. In terms of processing, phosphorylated by PKC in a calcium and phosphatidylserine-dependent manner. Expressed in a wide range of tissues.

It is found in the cytoplasm. Its subcellular location is the nucleus. It carries out the reaction a 1,2-diacyl-sn-glycero-3-phosphocholine(in) = a 1,2-diacyl-sn-glycero-3-phosphocholine(out). It catalyses the reaction a 1,2-diacyl-sn-glycero-3-phospho-(1D-myo-inositol)(in) = a 1,2-diacyl-sn-glycero-3-phospho-(1D-myo-inositol)(out). Phosphatidylinositol transfer activity is inhibited by N-ethylmaleimide. In terms of biological role, catalyzes the transfer of phosphatidylinositol (PI) and phosphatidylcholine (PC) between membranes. Shows a preference for PI and PC containing shorter saturated or monosaturated acyl chains at the sn-1 and sn-2 positions. Preference order for PC is C16:1 &gt; C16:0 &gt; C18:1 &gt; C18:0 &gt; C20:4 and for PI is C16:1 &gt; C16:0 &gt; C18:1 &gt; C18:0 &gt; C20:4 &gt; C20:3. The chain is Phosphatidylinositol transfer protein alpha isoform (Pitpna) from Rattus norvegicus (Rat).